A 301-amino-acid polypeptide reads, in one-letter code: E3 ubiquitin-protein ligase DIS1 (301 aa).

The RING-type; degenerate zinc-finger motif lies at C53 to R89. Residues S106–K166 form an SIAH-type; degenerate zinc finger.

It belongs to the SINA (Seven in absentia) family. Homodimer. Interacts with NEK6. Interacts with SKIPA.

The protein resides in the nucleus. It localises to the cytoplasm. The catalysed reaction is S-ubiquitinyl-[E2 ubiquitin-conjugating enzyme]-L-cysteine + [acceptor protein]-L-lysine = [E2 ubiquitin-conjugating enzyme]-L-cysteine + N(6)-ubiquitinyl-[acceptor protein]-L-lysine.. It participates in protein modification; protein ubiquitination. In terms of biological role, E3 ubiquitin-protein ligase that mediates ubiquitination and subsequent proteasomal degradation of target proteins. E3 ubiquitin ligases accept ubiquitin from an E2 ubiquitin-conjugating enzyme in the form of a thioester and then directly transfers the ubiquitin to targeted substrates. Plays a negative role in drought stress tolerance through transcriptional and post-translational regulation of diverse stress-related genes. Interacts with the serine/threonine-protein kinase NEK6 and promotes its degradation via the 26S proteasome-dependent pathway. This Oryza sativa subsp. japonica (Rice) protein is E3 ubiquitin-protein ligase DIS1.